The sequence spans 491 residues: Putative diacyglycerol O-acyltransferase MT2557 (491 aa).

The active-site Proton acceptor is His-145.

Belongs to the long-chain O-acyltransferase family.

It carries out the reaction an acyl-CoA + a 1,2-diacyl-sn-glycerol = a triacyl-sn-glycerol + CoA. It functions in the pathway glycerolipid metabolism; triacylglycerol biosynthesis. In Mycobacterium tuberculosis (strain CDC 1551 / Oshkosh), this protein is Putative diacyglycerol O-acyltransferase MT2557.